The following is a 458-amino-acid chain: Dihydrolipoyllysine-residue acetyltransferase component of pyruvate dehydrogenase complex, mitochondrial (458 aa).

Residues 1–28 (MIVPVLSRQALRHASVARVALPSLTRWY) constitute a mitochondrion transit peptide. A Lipoyl-binding domain is found at 34–110 (HTVVKMPALS…AVGNPIAILV (77 aa)). An N6-lipoyllysine modification is found at Lys-75. Residues 126–164 (DAGGETSPAVPKDEPKNESTASAPTPAPTPAPEPENTSF) form a disordered region. The 38-residue stretch at 177–214 (NALPAAKRLAREKGIDLRNVKGSGPGGKITEEDVKKAL) folds into the Peripheral subunit-binding (PSBD) domain. Catalysis depends on residues His-431 and Asp-435.

This sequence belongs to the 2-oxoacid dehydrogenase family. (R)-lipoate serves as cofactor.

It localises to the mitochondrion matrix. It carries out the reaction N(6)-[(R)-dihydrolipoyl]-L-lysyl-[protein] + acetyl-CoA = N(6)-[(R)-S(8)-acetyldihydrolipoyl]-L-lysyl-[protein] + CoA. Functionally, the pyruvate dehydrogenase complex catalyzes the overall conversion of pyruvate to acetyl-CoA and CO(2). It contains multiple copies of three enzymatic components: pyruvate dehydrogenase (E1), dihydrolipoamide acetyltransferase (E2) and lipoamide dehydrogenase (E3). The polypeptide is Dihydrolipoyllysine-residue acetyltransferase component of pyruvate dehydrogenase complex, mitochondrial (mrp-3) (Neurospora crassa (strain ATCC 24698 / 74-OR23-1A / CBS 708.71 / DSM 1257 / FGSC 987)).